A 651-amino-acid polypeptide reads, in one-letter code: Peptide-N(4)-(N-acetyl-beta-glucosaminyl)asparagine amidase (651 aa).

A2 carries the post-translational modification N-acetylalanine. Residues 30–91 enclose the PUB domain; that stretch reads EASKLLLTYA…EGETHLIFPK (62 aa). A disordered region spans residues 116–153; the sequence is SSQKVEFSQHPAAVRLPAEQPEDPTGLMQHSGNQPGQP. Residues 143-152 show a composition bias toward polar residues; sequence MQHSGNQPGQ. 4 residues coordinate Zn(2+): C247, C250, C280, and C283. The active-site Nucleophile is the C306. Residues H333 and D350 contribute to the active site. A PAW domain is found at 451–651; the sequence is ELGGRVSGSL…LEIIITFSDL (201 aa).

The protein belongs to the transglutaminase-like superfamily. PNGase family. As to quaternary structure, component of a complex required to couple retrotranslocation, ubiquitination and deglycosylation composed of NGLY1, SAKS1, AMFR, VCP and RAD23B. Interacts with the proteasome components RAD23B and PSMC1. Interacts with directly with VCP. Interacts with DERL1, bringing it close to the endoplasmic reticulum membrane. Interacts with SAKS1. The cofactor is Zn(2+).

Its subcellular location is the cytoplasm. The catalysed reaction is Hydrolysis of an N(4)-(acetyl-beta-D-glucosaminyl)asparagine residue in which the glucosamine residue may be further glycosylated, to yield a (substituted) N-acetyl-beta-D-glucosaminylamine and a peptide containing an aspartate residue.. Its activity is regulated as follows. Inhibited by Z-VAD-fmk, a well-known caspase inhibitor, which inhibits enzyme activity through covalent binding of the carbohydrate to the single Cys-306 residue. In terms of biological role, specifically deglycosylates the denatured form of N-linked glycoproteins in the cytoplasm and assists their proteasome-mediated degradation. Cleaves the beta-aspartyl-glucosamine (GlcNAc) of the glycan and the amide side chain of Asn, converting Asn to Asp. Prefers proteins containing high-mannose over those bearing complex type oligosaccharides. Can recognize misfolded proteins in the endoplasmic reticulum that are exported to the cytosol to be destroyed and deglycosylate them, while it has no activity toward native proteins. Deglycosylation is a prerequisite for subsequent proteasome-mediated degradation of some, but not all, misfolded glycoproteins. The sequence is that of Peptide-N(4)-(N-acetyl-beta-glucosaminyl)asparagine amidase (Ngly1) from Rattus norvegicus (Rat).